The chain runs to 930 residues: SCY1-like protein 2 (930 aa).

The Protein kinase domain maps to 32-327 (FDVGRHIASG…ADQMTKIPFF (296 aa)). An HEAT repeat occupies 443–479 (DEIKNSVLPMVYRALEAPSIQIQELCLNIIPTFANLI). Phosphoserine occurs at positions 658 and 677. The segment at 658–706 (SGSESENREDGMQGKQKRGSLTLEEKQKLAKEQEQAQKLKSQQPLKPQV) is disordered. Basic and acidic residues predominate over residues 680–694 (LEEKQKLAKEQEQAQ). Residues 695 to 705 (KLKSQQPLKPQ) show a composition bias toward low complexity. At Thr-708 the chain carries Phosphothreonine. Positions 895-930 (GMQGNPFFNPQNFAQPPPTTMTSSSSASNDLKDLFG) are disordered. Low complexity predominate over residues 897–922 (QGNPFFNPQNFAQPPPTTMTSSSSAS).

The protein belongs to the protein kinase superfamily. In terms of assembly, interacts with clathrin and AP2B1; the interaction mediates the association with the AP-2 complex. In terms of processing, could autophosphorylate in presence of poly-L-lysine. Ubiquitously expressed.

It is found in the cytoplasmic vesicle. The protein resides in the clathrin-coated vesicle. Its subcellular location is the golgi apparatus. The protein localises to the trans-Golgi network membrane. It localises to the endosome membrane. Its function is as follows. Component of the AP2-containing clathrin coat that may regulate clathrin-dependent trafficking at plasma membrane, TGN and endosomal system. A possible serine/threonine-protein kinase toward the beta2-subunit of the plasma membrane adapter complex AP2 and other proteins in presence of poly-L-lysine has not been confirmed. By regulating the expression of excitatory receptors at synapses, plays an essential role in neuronal function and signaling and in brain development. This chain is SCY1-like protein 2, found in Mus musculus (Mouse).